Reading from the N-terminus, the 237-residue chain is Cytosolic-abundant heat soluble protein 86272 (237 aa).

The segment at Phe96–Arg125 is disordered. Positions Arg111–Arg125 are enriched in basic and acidic residues. Residues Lys115 to Ala193 are a coiled coil. CAHS motif stretches follow at residues Tyr124–Gln142 and Gln161–Glu179. The segment covering Ala204–Ser215 has biased composition (low complexity). A disordered region spans residues Ala204–Phe237. Positions Glu216–Phe237 are enriched in basic and acidic residues.

It belongs to the Cytosolic-abundant heat soluble protein (CAHS) family.

The protein resides in the cytoplasm. In terms of biological role, CAHS proteins are cytosolic heat soluble proteins that seem to contribute to the anhydrobiosis in tardigrades, but their specific mechanisms are yet to be identified. It is possible that protection during anhydrobiosis might occur via the stabilization of vitrifying small molecules such as sugars, but not via the direct glass transition of CAHS proteins themselves. The sequence is that of Cytosolic-abundant heat soluble protein 86272 from Hypsibius exemplaris (Freshwater tardigrade).